We begin with the raw amino-acid sequence, 376 residues long: Gibberellic acid methyltransferase 1 (376 aa).

Residues Tyr22, Cys64, Asn69, Asp104, Leu105, Ser136, and Phe137 each coordinate S-adenosyl-L-homocysteine. Gibberellin A9 is bound at residue Trp158. Residues Asn175, Val179, Arg265, Asp266, Phe268, and Asn269 each contribute to the Mg(2+) site.

It belongs to the methyltransferase superfamily. Type-7 methyltransferase family. SABATH subfamily. The cofactor is Mg(2+). In terms of tissue distribution, expressed in siliques, developing seeds, anthers and germinating seeds. Not detected in leaves, stems, flowers and roots.

It carries out the reaction gibberellin A9 + S-adenosyl-L-methionine = O-methyl gibberellin A9 + S-adenosyl-L-homocysteine. With respect to regulation, up-regulated by K(+) and NH(4+), down-regulated by Zn(2+), Cu(2+), Fe(2+) and Fe(3+). In terms of biological role, methylates the carboxyl group of several gibberellins (GAs). Substrate preference is GA9 &gt; GA20 &gt; GA3 &gt; GA4 &gt; GA34 &gt; GA51 &gt; GA1 &gt; GA19 &gt; GA12. No activity with diterpenes abietic acid and ent-kaurenoic acid. The protein is Gibberellic acid methyltransferase 1 (GAMT1) of Arabidopsis thaliana (Mouse-ear cress).